The sequence spans 418 residues: Histidinol dehydrogenase (418 aa).

NAD(+)-binding residues include tyrosine 119, glutamine 180, and asparagine 203. Positions 226, 248, and 251 each coordinate substrate. Glutamine 248 and histidine 251 together coordinate Zn(2+). Residues glutamate 316 and histidine 317 each act as proton acceptor in the active site. Positions 317, 350, 404, and 409 each coordinate substrate. Aspartate 350 contacts Zn(2+). Histidine 409 contributes to the Zn(2+) binding site.

This sequence belongs to the histidinol dehydrogenase family. The cofactor is Zn(2+).

The enzyme catalyses L-histidinol + 2 NAD(+) + H2O = L-histidine + 2 NADH + 3 H(+). It participates in amino-acid biosynthesis; L-histidine biosynthesis; L-histidine from 5-phospho-alpha-D-ribose 1-diphosphate: step 9/9. Functionally, catalyzes the sequential NAD-dependent oxidations of L-histidinol to L-histidinaldehyde and then to L-histidine. This is Histidinol dehydrogenase from Staphylococcus aureus (strain MRSA252).